We begin with the raw amino-acid sequence, 141 residues long: Large ribosomal subunit protein uL11 (141 aa).

It belongs to the universal ribosomal protein uL11 family. In terms of assembly, part of the ribosomal stalk of the 50S ribosomal subunit. Interacts with L10 and the large rRNA to form the base of the stalk. L10 forms an elongated spine to which L12 dimers bind in a sequential fashion forming a multimeric L10(L12)X complex. Post-translationally, one or more lysine residues are methylated.

Functionally, forms part of the ribosomal stalk which helps the ribosome interact with GTP-bound translation factors. The polypeptide is Large ribosomal subunit protein uL11 (Alkaliphilus oremlandii (strain OhILAs) (Clostridium oremlandii (strain OhILAs))).